The chain runs to 418 residues: Serine hydroxymethyltransferase (418 aa).

(6S)-5,6,7,8-tetrahydrofolate contacts are provided by residues Leu121 and 125-127; that span reads GHL. Lys230 bears the N6-(pyridoxal phosphate)lysine mark. Residue 355 to 357 coordinates (6S)-5,6,7,8-tetrahydrofolate; that stretch reads SPF.

It belongs to the SHMT family. Homodimer. Pyridoxal 5'-phosphate is required as a cofactor.

Its subcellular location is the cytoplasm. It carries out the reaction (6R)-5,10-methylene-5,6,7,8-tetrahydrofolate + glycine + H2O = (6S)-5,6,7,8-tetrahydrofolate + L-serine. It participates in one-carbon metabolism; tetrahydrofolate interconversion. It functions in the pathway amino-acid biosynthesis; glycine biosynthesis; glycine from L-serine: step 1/1. In terms of biological role, catalyzes the reversible interconversion of serine and glycine with tetrahydrofolate (THF) serving as the one-carbon carrier. This reaction serves as the major source of one-carbon groups required for the biosynthesis of purines, thymidylate, methionine, and other important biomolecules. Also exhibits THF-independent aldolase activity toward beta-hydroxyamino acids, producing glycine and aldehydes, via a retro-aldol mechanism. The protein is Serine hydroxymethyltransferase of Streptococcus pyogenes serotype M18 (strain MGAS8232).